The following is a 251-amino-acid chain: MTNAVTVKNITFQEGETLICVPLIGKTLDEILGNAHGLVDAGADIIEWRVDHFTQVRDMTQVMAALAEIRGALKALPLLFTFRSKKEGGETEISDEAYFALNREAARSGLVDVIDIELFNDEAQIHALVDDAHAAGVKVIMSNHDFHKTPAQEDIIYRLRRMQDLGADLPKIAVMPQSPQDVLTLLAATLTMKEKYATRPLITMSMGKSGGVSRVTGRLFGSAMTFGTVGQASAPGQIAIAKLREVMDILS.

3-dehydroquinate is bound by residues 47-49 and arginine 83; that span reads EWR. Histidine 144 acts as the Proton donor/acceptor in catalysis. Residue lysine 171 is the Schiff-base intermediate with substrate of the active site. Residues arginine 214, serine 233, and glutamine 237 each coordinate 3-dehydroquinate.

It belongs to the type-I 3-dehydroquinase family. In terms of assembly, homodimer.

It catalyses the reaction 3-dehydroquinate = 3-dehydroshikimate + H2O. It functions in the pathway metabolic intermediate biosynthesis; chorismate biosynthesis; chorismate from D-erythrose 4-phosphate and phosphoenolpyruvate: step 3/7. Its function is as follows. Involved in the third step of the chorismate pathway, which leads to the biosynthesis of aromatic amino acids. Catalyzes the cis-dehydration of 3-dehydroquinate (DHQ) and introduces the first double bond of the aromatic ring to yield 3-dehydroshikimate. This chain is 3-dehydroquinate dehydratase, found in Klebsiella pneumoniae (strain 342).